The following is a 596-amino-acid chain: MGKKSRVKTQKSGTGATAAVSPKEMMNLISELLQKCSSAAPSPGKEWEEYVQIRALVEKIRKKQKGMSVSFEGIREDFFSELMAWAAECRASCDGFEISNFADEGYGLKATKDIKAEELFLWIPRKMLMTVESAKNSVLGPLYSQDRILQAMGNVTLALHLLCERANPSSPWLPYIKTLPSEYDTPLYFEEEEVRHLLATQAIQDVLSQYKNTARQYAYFYKVIHTHPNASKLPLKDAFTFDDYRWAVSSVMTRQNQIPTADGSRVTLALIPLWDMCNHTNGLITTGYNLEDDRCECVALKDYKEGEQIYIFYGTRSNAEFVIHNGFFFEDNAHDRVKIKLGVSKGERLYAMKAEVLARAGIPASSIFALHCSEPPISAQLLAFLRVFCMTEEELRDYLVGDHAINKIFTLGNTEFPVSWENEIKLWTFLETRAALLLKTYKTASEEDRSMLEKPDLSLHSRIAIKLRLAEKEILEHAVSCGRAKRLHFQKQLDEGAPLPLYEESDIALLENADAKLPIILRKLEEEEEEHVEEMNQLTPDAVCMNSSKIPVLNGQCKDLNGTQEDPPGGGAVVKEIEKHDPSAKRTEGEPKDAGK.

S-adenosyl-L-methionine is bound by residues arginine 75, 104-106 (EGY), arginine 254, 275-279 (DMCNH), and 325-327 (NGF). Positions 94–314 (DGFEISNFAD…EGEQIYIFYG (221 aa)) constitute an SET domain. The interval 556–596 (QCKDLNGTQEDPPGGGAVVKEIEKHDPSAKRTEGEPKDAGK) is disordered. Over residues 575-596 (KEIEKHDPSAKRTEGEPKDAGK) the composition is skewed to basic and acidic residues.

The protein belongs to the class V-like SAM-binding methyltransferase superfamily. SETD3 actin-histidine methyltransferase family.

The protein resides in the cytoplasm. It carries out the reaction L-histidyl-[protein] + S-adenosyl-L-methionine = N(tele)-methyl-L-histidyl-[protein] + S-adenosyl-L-homocysteine + H(+). In terms of biological role, protein-histidine N-methyltransferase that specifically mediates 3-methylhistidine (tele-methylhistidine) methylation of actin at 'His-73'. Does not have protein-lysine N-methyltransferase activity and probably only catalyzes histidine methylation of actin. This is Actin-histidine N-methyltransferase from Danio rerio (Zebrafish).